Here is a 384-residue protein sequence, read N- to C-terminus: Anhydro-N-acetylmuramic acid kinase (384 aa).

Gly-9–Asp-16 is an ATP binding site.

The protein belongs to the anhydro-N-acetylmuramic acid kinase family.

The catalysed reaction is 1,6-anhydro-N-acetyl-beta-muramate + ATP + H2O = N-acetyl-D-muramate 6-phosphate + ADP + H(+). It functions in the pathway amino-sugar metabolism; 1,6-anhydro-N-acetylmuramate degradation. It participates in cell wall biogenesis; peptidoglycan recycling. Catalyzes the specific phosphorylation of 1,6-anhydro-N-acetylmuramic acid (anhMurNAc) with the simultaneous cleavage of the 1,6-anhydro ring, generating MurNAc-6-P. Is required for the utilization of anhMurNAc either imported from the medium or derived from its own cell wall murein, and thus plays a role in cell wall recycling. The protein is Anhydro-N-acetylmuramic acid kinase of Synechococcus sp. (strain CC9311).